The following is a 285-amino-acid chain: Formamidopyrimidine-DNA glycosylase (285 aa).

Catalysis depends on proline 2, which acts as the Schiff-base intermediate with DNA. Residue glutamate 3 is the Proton donor of the active site. Residue lysine 61 is the Proton donor; for beta-elimination activity of the active site. Positions 102, 121, and 163 each coordinate DNA. The FPG-type zinc finger occupies 249–283; that stretch reads NAYGQAGKPCARCGTPIARETFMNRGSHFCNRCQK. Arginine 273 serves as the catalytic Proton donor; for delta-elimination activity.

It belongs to the FPG family. In terms of assembly, monomer. The cofactor is Zn(2+).

The catalysed reaction is Hydrolysis of DNA containing ring-opened 7-methylguanine residues, releasing 2,6-diamino-4-hydroxy-5-(N-methyl)formamidopyrimidine.. The enzyme catalyses 2'-deoxyribonucleotide-(2'-deoxyribose 5'-phosphate)-2'-deoxyribonucleotide-DNA = a 3'-end 2'-deoxyribonucleotide-(2,3-dehydro-2,3-deoxyribose 5'-phosphate)-DNA + a 5'-end 5'-phospho-2'-deoxyribonucleoside-DNA + H(+). Its function is as follows. Involved in base excision repair of DNA damaged by oxidation or by mutagenic agents. Acts as a DNA glycosylase that recognizes and removes damaged bases. Has a preference for oxidized purines, such as 7,8-dihydro-8-oxoguanine (8-oxoG). Has AP (apurinic/apyrimidinic) lyase activity and introduces nicks in the DNA strand. Cleaves the DNA backbone by beta-delta elimination to generate a single-strand break at the site of the removed base with both 3'- and 5'-phosphates. In Corynebacterium efficiens (strain DSM 44549 / YS-314 / AJ 12310 / JCM 11189 / NBRC 100395), this protein is Formamidopyrimidine-DNA glycosylase.